Reading from the N-terminus, the 297-residue chain is uncharacterized protein (297 aa).

Residues 191 to 211 (VMIILSCSNITILAVLSIVGL) form a helical membrane-spanning segment. Over residues 275 to 287 (SKTSETQSVSGST) the composition is skewed to polar residues. The interval 275-297 (SKTSETQSVSGSTHSDEKLTAPM) is disordered. The span at 288 to 297 (HSDEKLTAPM) shows a compositional bias: basic and acidic residues.

It is found in the host membrane. This is an uncharacterized protein from Cryphonectria parasitica mycoreovirus 1 (strain 9B21) (CpMYRV-1).